We begin with the raw amino-acid sequence, 457 residues long: Siroheme synthase (457 aa).

The precorrin-2 dehydrogenase /sirohydrochlorin ferrochelatase stretch occupies residues 1-204 (MDHLPIFCQL…ADEKAVNATT (204 aa)). NAD(+) contacts are provided by residues 22-23 (DV) and 43-44 (LT). S128 carries the post-translational modification Phosphoserine. The segment at 216 to 457 (GEVVLVGAGP…RDKLNWFSNY (242 aa)) is uroporphyrinogen-III C-methyltransferase. P225 provides a ligand contact to S-adenosyl-L-methionine. Catalysis depends on D248, which acts as the Proton acceptor. The Proton donor role is filled by K270. Residues 301–303 (GGD), I306, 331–332 (TA), M382, and G411 each bind S-adenosyl-L-methionine.

In the N-terminal section; belongs to the precorrin-2 dehydrogenase / sirohydrochlorin ferrochelatase family. This sequence in the C-terminal section; belongs to the precorrin methyltransferase family.

It carries out the reaction uroporphyrinogen III + 2 S-adenosyl-L-methionine = precorrin-2 + 2 S-adenosyl-L-homocysteine + H(+). The catalysed reaction is precorrin-2 + NAD(+) = sirohydrochlorin + NADH + 2 H(+). The enzyme catalyses siroheme + 2 H(+) = sirohydrochlorin + Fe(2+). It functions in the pathway cofactor biosynthesis; adenosylcobalamin biosynthesis; precorrin-2 from uroporphyrinogen III: step 1/1. The protein operates within cofactor biosynthesis; adenosylcobalamin biosynthesis; sirohydrochlorin from precorrin-2: step 1/1. Its pathway is porphyrin-containing compound metabolism; siroheme biosynthesis; precorrin-2 from uroporphyrinogen III: step 1/1. It participates in porphyrin-containing compound metabolism; siroheme biosynthesis; siroheme from sirohydrochlorin: step 1/1. It functions in the pathway porphyrin-containing compound metabolism; siroheme biosynthesis; sirohydrochlorin from precorrin-2: step 1/1. Its function is as follows. Multifunctional enzyme that catalyzes the SAM-dependent methylations of uroporphyrinogen III at position C-2 and C-7 to form precorrin-2 via precorrin-1. Then it catalyzes the NAD-dependent ring dehydrogenation of precorrin-2 to yield sirohydrochlorin. Finally, it catalyzes the ferrochelation of sirohydrochlorin to yield siroheme. The protein is Siroheme synthase of Salmonella gallinarum (strain 287/91 / NCTC 13346).